We begin with the raw amino-acid sequence, 332 residues long: Ephrin-B2a (332 aa).

A signal peptide spans 1 to 24; it reads MGDSLWRYYFGVLVIACKVNLSRA. 2 N-linked (GlcNAc...) asparagine glycosylation sites follow: N20 and N33. The 137-residue stretch at 25–161 folds into the Ephrin RBD domain; that stretch reads LILDSIYWNT…TKSMKIIMKV (137 aa). Residues 25–225 are Extracellular-facing; the sequence is LILDSIYWNT…VIGSEVALFA (201 aa). 2 disulfide bridges follow: C59/C98 and C86/C150. The N-linked (GlcNAc...) asparagine glycan is linked to N136. Residues 162 to 212 are disordered; sequence GQNPSDPISPKDYPTSYPPKHPDLGGKDSKSNEVLKPDASPHGEDKGDGNK. Residues 181-210 are compositionally biased toward basic and acidic residues; sequence KHPDLGGKDSKSNEVLKPDASPHGEDKGDG. N211 is a glycosylation site (N-linked (GlcNAc...) asparagine). The chain crosses the membrane as a helical span at residues 226 to 246; that stretch reads CIASASVIVIIIIIMLVFLLL. Residues 247-332 are Cytoplasmic-facing; the sequence is KYRRRHRKHS…QSPANIYYKV (86 aa). Residues 255–285 form a disordered region; it reads HSPQHATTLSLSTLATPKRGGSGGNNNGSEP. A compositionally biased stretch (low complexity) spans 260 to 270; sequence ATTLSLSTLAT. A PDZ-binding motif is present at residues 330–332; sequence YKV.

This sequence belongs to the ephrin family. Binds to the receptor tyrosine kinase ephb4. Post-translationally, inducible phosphorylation of tyrosine residues in the cytoplasmic domain.

It is found in the cell membrane. Functionally, cell surface transmembrane ligand for Eph receptors, a family of receptor tyrosine kinases which are crucial for migration, repulsion and adhesion during neuronal, vascular and epithelial development. Binds promiscuously Eph receptors residing on adjacent cells, leading to contact-dependent bidirectional signaling into neighboring cells. The signaling pathway downstream of the receptor is referred to as forward signaling while the signaling pathway downstream of the ephrin ligand is referred to as reverse signaling. Together with ephb4 may play a central role in heart morphogenesis and angiogenesis through regulation of cell adhesion and cell migration. The polypeptide is Ephrin-B2a (efnb2a) (Danio rerio (Zebrafish)).